Reading from the N-terminus, the 224-residue chain is Deoxyguanosine kinase (224 aa).

8–16 (GPIGAGKSS) lines the ATP pocket. Positions 32, 44, and 55 each coordinate substrate. The active-site Proton acceptor is the aspartate 78. Substrate-binding residues include arginine 79, aspartate 84, and glutamate 149.

It belongs to the DCK/DGK family. In terms of assembly, heterodimer of a deoxyadenosine (DAK) and a deoxyguanosine kinase (DGK).

The catalysed reaction is 2'-deoxyguanosine + ATP = dGMP + ADP + H(+). Functionally, DGK/DAK plays an essential role in generating the deoxyribonucleotide precursors, dGTP and dATP, for DNA metabolism. The protein is Deoxyguanosine kinase of Lactobacillus johnsonii (strain CNCM I-12250 / La1 / NCC 533).